The following is a 440-amino-acid chain: 5-hydroxytryptamine receptor 6 (440 aa).

At 1–27 (MVPEPGPVNSSTPAWGPGPPPAPGGSG) the chain is on the extracellular side. Asparagine 9 is a glycosylation site (N-linked (GlcNAc...) asparagine). Residues 28-52 (WVAAALCVVIVLTAAANSLLIALIC) traverse the membrane as a helical segment. At 53 to 62 (TQPALRNTSN) the chain is on the cytoplasmic side. A helical transmembrane segment spans residues 63-88 (FFLVSLFTSDLMVGLVVMPPAMLNAL). At 89–96 (YGRWVLAR) the chain is on the extracellular side. Residues 97–122 (GLCLLWTAFDVMCCSASILNLCLISL) form a helical membrane-spanning segment. The cysteines at positions 99 and 180 are disulfide-linked. Aspartate 106 lines the serotonin pocket. At 123–142 (DRYLLILSPLRYKLRMTAPR) the chain is on the cytoplasmic side. A helical transmembrane segment spans residues 143–167 (ALALILGAWSLAALASFLPLLLGWH). Residues 168–185 (ELGKARTSAPGQCRLLAS) lie on the Extracellular side of the membrane. A helical membrane pass occupies residues 186 to 209 (LPYVLVASGVTFFLPSGAICFTYC). Over 210 to 268 (RILLAARKQAVQVASLTTGTATAGQALETLQVPRTPRPGMESADSRRLTTKHSRKALKA) the chain is Cytoplasmic. Residues 269–295 (SLTLGILLSMFFVTWLPFFVASIAQAV) traverse the membrane as a helical segment. At 296–301 (CDCISP) the chain is on the extracellular side. Residues 302 to 325 (GLFDVLTWLGYCNSTMNPIIYPLF) traverse the membrane as a helical segment. Over 326–440 (MRDFKRALGR…RQHPLGSPMN (115 aa)) the chain is Cytoplasmic.

It belongs to the G-protein coupled receptor 1 family. Interacts with CDK5. Interacts with MTOR. Interacts with RPTOR and NF1.

The protein localises to the cell membrane. In terms of biological role, G-protein coupled receptor for 5-hydroxytryptamine (serotonin), a biogenic hormone that functions as a neurotransmitter, a hormone and a mitogen. Also has a high affinity for tricyclic psychotropic drugs. Ligand binding causes a conformation change that triggers signaling via guanine nucleotide-binding proteins (G proteins) and modulates the activity of downstream effectors. HTR6 is coupled to G(s) G alpha proteins and mediates activation of adenylate cyclase activity. Controls pyramidal neurons migration during corticogenesis, through the regulation of CDK5 activity. Is an activator of mTOR signaling. The chain is 5-hydroxytryptamine receptor 6 from Mus musculus (Mouse).